The chain runs to 316 residues: MDMSVIMRYGDDKAEELCLEVEDYWARVDESDGFDVEGIQAPPGGTPLIHYDCHLPNSRHPDPVLVKLYASAGLHRYNMLEGTNFKLVDVMKFNKLMMHLSPFYITLLAQDPVSRSQQTFQVQVDEHCLSTMDLTVLIARPKAVSTNESVLAPQSFSVEESPEWPSDFNDGKRFYRVKESELRNNDWISLYLQLVLVSHDRMRISDSDLSKLKIVEAVIETKDDMLPPNERLLNAKTAIVYITFKGFTKCRIGDEHTERKTIVRRIFDEDTGHLSIKGELIGEYKLGGDFDPGCYFNSPAILEARRICQGLPPQPF.

Belongs to the UPF0725 (EMB2204) family.

The protein is UPF0725 protein At1g02770 of Arabidopsis thaliana (Mouse-ear cress).